The chain runs to 296 residues: Myeloid differentiation primary response protein MyD88 (296 aa).

The Death domain maps to M54–I109. An intermediate domain region spans residues E110–G155. In terms of domain architecture, TIR spans E159–L293. S244 is modified (phosphoserine).

Homodimer. Also forms heterodimers with TIRAP. Binds to TLR2, TLR4, IRAK1, IRAK2 and IRAK4 via their respective TIR domains. Interacts with IL18R1. Interacts with BMX, IL1RL1, IKBKE and IRF7. Interacts with LRRFIP1 and LRRFIP2; this interaction positively regulates Toll-like receptor (TLR) signaling in response to agonist. Interacts with FLII. LRRFIP1 and LRRFIP2 compete with FLII for MYD88-binding. Interacts with IRF1. Upon IL1B treatment, forms a complex with PELI1, IRAK1, IRAK4 and TRAF6; this complex recruits MAP3K7/TAK1, TAB1 and TAB2 to mediate NF-kappa-B activation. Direct binding of SMAD6 to PELI1 prevents the complex formation and hence negatively regulates IL1R-TLR signaling and eventually NF-kappa-B-mediated gene expression. May interact with PIK3AP1. Interacts (via TIR domain) with DHX9 (via H2A and OB-fold regions); this interaction is direct. Interacts with OTUD4 deubiquitinase; the interaction is direct. Post-translationally, ubiquitinated; undergoes 'Lys-63'-linked polyubiquitination. OTUD4 specifically hydrolyzes 'Lys-63'-linked polyubiquitinated MYD88. Deubiquitinated by USP3 that cleaves 'Lys-63'-linked ubiquitin chains leading to inhibition of MYD88-induced NF-kappa-B signaling. In terms of tissue distribution, detected in bone marrow. Isoform 1 is expressed in testis, kidney, lung, ovary, adrenal gland, provstate, thymus and heart, and weakly in skeletal muscle, liver, spleen and brain. Isoform 2 is mainly expressed in the spleen and weakly in brain.

Its subcellular location is the cytoplasm. It is found in the nucleus. Its function is as follows. Adapter protein involved in the Toll-like receptor and IL-1 receptor signaling pathway in the innate immune response. Acts via IRAK1, IRAK2, IRF7 and TRAF6, leading to NF-kappa-B activation, cytokine secretion and the inflammatory response. Increases IL-8 transcription. Involved in IL-18-mediated signaling pathway. Activates IRF1 resulting in its rapid migration into the nucleus to mediate an efficient induction of IFN-beta, NOS2/INOS, and IL12A genes. Upon TLR8 activation by GU-rich single-stranded RNA (GU-rich RNA) derived from viruses, induces IL1B release through NLRP3 inflammasome activation. MyD88-mediated signaling in intestinal epithelial cells is crucial for maintenance of gut homeostasis and controls the expression of the antimicrobial lectin REG3G in the small intestine. Mediates leukocyte recruitment at the inflammatory site. Defective in its ability to induce IRAK phosphorylation and NF-kappa-B activation and can function as a negative regulator of activation by IL-1 or lipopolysaccharide (LPS). In Mus musculus (Mouse), this protein is Myeloid differentiation primary response protein MyD88.